Consider the following 433-residue polypeptide: Glutamate-1-semialdehyde 2,1-aminomutase (433 aa).

Position 271 is an N6-(pyridoxal phosphate)lysine (K271).

The protein belongs to the class-III pyridoxal-phosphate-dependent aminotransferase family. HemL subfamily. Homodimer. The cofactor is pyridoxal 5'-phosphate.

It localises to the cytoplasm. The enzyme catalyses (S)-4-amino-5-oxopentanoate = 5-aminolevulinate. It participates in porphyrin-containing compound metabolism; protoporphyrin-IX biosynthesis; 5-aminolevulinate from L-glutamyl-tRNA(Glu): step 2/2. The protein operates within porphyrin-containing compound metabolism; chlorophyll biosynthesis. This is Glutamate-1-semialdehyde 2,1-aminomutase from Prochlorococcus marinus (strain MIT 9301).